Reading from the N-terminus, the 493-residue chain is Leucine-rich repeat-containing protein 14 (493 aa).

One copy of the LRR 1; degenerate repeat lies at 111 to 146 (KHALRVLDMTGLLDDGVEQDPGTMSMWDCTAAVART). The LRR 2; degenerate repeat unit spans residues 194-218 (RLCCRDLRAEDLPMRNTVALLQLLD). The LRR 3; degenerate repeat unit spans residues 219–246 (AGCLRRVDLRFNNLGLRGLSVIIPHVAR). One copy of the LRR 4; degenerate repeat lies at 247-282 (FQHLASLRLHYVHGDSRQPSVDGEDNFRYFLAQMGR). LRR repeat units follow at residues 283–307 (FTCL…LSTL), 308–339 (QSPL…AHLK), 340–360 (KLDL…QGLL), 364–391 (AATL…ILTQ), and 392–416 (CASL…LLRD).

Belongs to the PRAME family. LRRC14 subfamily. As to quaternary structure, interacts with IKBKB; disrupts IKBKB-IKBKG interaction preventing I-kappa-B-kinase (IKK) core complex formation and leading to a decrease of IKBKB phosphorylation and NF-kappaB activation. Interacts with CHUK.

It localises to the cytoplasm. Functionally, negatively regulates Toll-like receptor-mediated NF-kappa-B signaling by disrupting IKK core complex formation through interaction with IKBKB. This Homo sapiens (Human) protein is Leucine-rich repeat-containing protein 14.